The primary structure comprises 122 residues: Large ribosomal subunit protein uL14c (122 aa).

It belongs to the universal ribosomal protein uL14 family. As to quaternary structure, part of the 50S ribosomal subunit.

Its subcellular location is the plastid. It is found in the chloroplast. In terms of biological role, binds to 23S rRNA. This chain is Large ribosomal subunit protein uL14c (rpl14), found in Bigelowiella natans (Pedinomonas minutissima).